Consider the following 219-residue polypeptide: Ribosome maturation factor RimP (219 aa).

The disordered stretch occupies residues 195–219; the sequence is EGRIPGDDLGAEPEDAASTETQEKK.

The protein belongs to the RimP family.

It is found in the cytoplasm. Required for maturation of 30S ribosomal subunits. The chain is Ribosome maturation factor RimP from Brucella melitensis biotype 2 (strain ATCC 23457).